A 134-amino-acid polypeptide reads, in one-letter code: Histone H3-like centromeric protein A (134 aa).

The segment covering 1-14 (MGPRRKPQTPRRRP) has biased composition (basic residues). A disordered region spans residues 1–34 (MGPRRKPQTPRRRPSSPAPGPSRQSSSVGSQTLR). Residue Gly2 is modified to N,N,N-trimethylglycine. A phosphoserine mark is found at Ser16 and Ser22. The tract at residues 34–48 (RRRQKFMWLKEIKTL) is important for flexibility of DNA ends that protrude from nucleosomes. The tract at residues 35-134 (RRQKFMWLKE…RIRGFEGGLP (100 aa)) is H3-like. A Phosphoserine modification is found at Ser62. Residues 69–110 (CEKFSRGVDFWWQAQALLALQEAAEAFLIHLFEDAYLLSLHA) are CATD.

This sequence belongs to the histone H3 family. Component of centromeric nucleosomes, where DNA is wrapped around a histone octamer core. The octamer contains two molecules each of H2A, H2B, CENPA and H4 assembled in one CENPA-H4 heterotetramer and two H2A-H2B heterodimers. CENPA modulates the DNA-binding characteristics of nucleosomes so that protruding DNA ends have higher flexibility than in nucleosomes containing conventional histone H3. Inhibits binding of histone H1 to nucleosomes, since histone H1 binds preferentially to rigid DNA linkers that protrude from nucleosomes. Nucleosomes containing CENPA also contain histone H2A variants such as MACROH2A and H2A.Z/H2AZ1. The CENPA-H4 heterotetramer is more compact and structurally more rigid than corresponding H3-H4 heterotetramers. Can assemble into nucleosomes that contain both CENPA and histone H3.3; these nucleosomes interact with a single CENPC chain. Heterotrimer composed of HJURP, CENPA and histone H4, where HJURP interacts with the dimer formed by CENPA and histone H4 and prevents tetramerization of CENPA and H4. Component of the CENPA-NAC complex, at least composed of CENPA, CENPC, CENPH, CENPM, CENPN, CENPT and CENPU. Interacts (via CATD domain) with HJURP; the interaction is direct and is required for its localization to centromeres. Interacts with CENPC, CENPN and CENPT; interaction is direct. Part of a centromere complex consisting of CENPA, CENPT and CENPW. Identified in centromere complexes containing histones H2A, H2B and H4, and at least CENPA, CENPB, CENPC, CENPT, CENPN, HJURP, SUPT16H, SSRP1 and RSF1. Can self-associate. The CENPA-H4 heterotetramer can bind DNA by itself (in vitro). Interacts with CDK1, PPP1CA and RBBP7. In terms of processing, poly-ADP-ribosylated by PARP1. Post-translationally, trimethylated by NTMT1 at the N-terminal glycine after cleavage of Met-1. Methylation is low before incorporation into nucleosomes and increases with cell cycle progression, with the highest levels in mitotic nucleosomes. Phosphorylated by CDK1 at Ser-62 during early mitosis; this abolishes association with chromatin and centromeres, prevents interaction with HJURP and thereby prevents premature assembly of CENPA into centromeres. Dephosphorylated at Ser-62 by PPP1CA during late mitosis.

The protein localises to the nucleus. The protein resides in the chromosome. It is found in the centromere. Histone H3-like nucleosomal protein that is specifically found in centromeric nucleosomes. Replaces conventional H3 in the nucleosome core of centromeric chromatin that serves as an assembly site for the inner kinetochore. The presence of CENPA subtly modifies the nucleosome structure and the way DNA is wrapped around the nucleosome and gives rise to protruding DNA ends that are less well-ordered and rigid compared to nucleosomes containing histone H3. May serve as an epigenetic mark that propagates centromere identity through replication and cell division. Required for recruitment and assembly of kinetochore proteins, and as a consequence required for progress through mitosis, chromosome segregation and cytokinesis. This Mus musculus (Mouse) protein is Histone H3-like centromeric protein A (Cenpa).